The following is a 428-amino-acid chain: MKKQNLRSLAAQAVEQVVEQGQSLSNVLPPLQQKVSDKDKALLQELCFGVLRTLSQLEWLINKLMSRPMTGKQRTVHYLIMVGFYQLLHTRIPPHAALAETVEGAVAIKRPQLKGLINGVLRQFQRQQEALLAEFATSEARFLHPSWLLKRLQKSYPTQWEAIVEANNQRPPMWLRVNRTHHSRDSWLTLLQDAGMNGFPHSAYPDALRLESPAPVHALPGFEEGWVTVQDASAQGCVSFLAPQNGEKILDLCAAPGGKTTHILEAAPEAQVLAVDVDEQRLSRVYDNLKRLGMKATVKQGDGRYPAQWCGEQKFDRILLDAPCSATGVIRRHPDIKWLRRDRDIAELAKLQSEILDAIWPHLKSGGTLVYATCSVLPEENSQQILAFLQRTPDATLTGTGTPAQPGVQNLPGAEEGDGFFYAKLIKK.

S-adenosyl-L-methionine is bound by residues 253-259 (CAAPGGK), Asp276, Asp302, and Asp321. Cys374 serves as the catalytic Nucleophile.

It belongs to the class I-like SAM-binding methyltransferase superfamily. RsmB/NOP family.

The protein resides in the cytoplasm. It catalyses the reaction cytidine(967) in 16S rRNA + S-adenosyl-L-methionine = 5-methylcytidine(967) in 16S rRNA + S-adenosyl-L-homocysteine + H(+). Specifically methylates the cytosine at position 967 (m5C967) of 16S rRNA. The polypeptide is Ribosomal RNA small subunit methyltransferase B (Citrobacter koseri (strain ATCC BAA-895 / CDC 4225-83 / SGSC4696)).